Consider the following 492-residue polypeptide: N-succinylglutamate 5-semialdehyde dehydrogenase (492 aa).

NAD(+) is bound at residue 220-225; sequence GSASTG. Active-site residues include Glu-243 and Cys-277.

This sequence belongs to the aldehyde dehydrogenase family. AstD subfamily.

The enzyme catalyses N-succinyl-L-glutamate 5-semialdehyde + NAD(+) + H2O = N-succinyl-L-glutamate + NADH + 2 H(+). Its pathway is amino-acid degradation; L-arginine degradation via AST pathway; L-glutamate and succinate from L-arginine: step 4/5. Catalyzes the NAD-dependent reduction of succinylglutamate semialdehyde into succinylglutamate. In Salmonella gallinarum (strain 287/91 / NCTC 13346), this protein is N-succinylglutamate 5-semialdehyde dehydrogenase.